Consider the following 409-residue polypeptide: Broad specificity amino-acid racemase (409 aa).

An N-terminal signal peptide occupies residues 1-24; sequence MPFRRTLLAASLALLITGQAPLYA. Cysteine 71 and cysteine 97 are oxidised to a cystine. Catalysis depends on lysine 75, which acts as the Proton acceptor. Residue lysine 75 is modified to N6-(pyridoxal phosphate)lysine. Arginine 174 provides a ligand contact to substrate. The active-site Proton acceptor is the tyrosine 301. Methionine 349 lines the substrate pocket.

It belongs to the alanine racemase family. Bsr subfamily. Pyridoxal 5'-phosphate is required as a cofactor.

It localises to the periplasm. The catalysed reaction is an L-alpha-amino acid = a D-alpha-amino acid. The enzyme catalyses L-lysine = D-lysine. It carries out the reaction L-arginine = D-arginine. It catalyses the reaction L-glutamine = D-glutamine. Its function is as follows. Amino-acid racemase able to utilize a broad range of substrates. Reversibly racemizes 9 of the 19 natural chiral amino acids known, including both positively charged amino acids (Lys, Arg and His) and non-beta-branched aliphatic amino acids (Ala, Leu, Met, Ser, Gln and Asn). Among these amino acids, activity is the highest with lysine and arginine, and poor or very poor with the others. Plays a primary role in the catabolism of basic amino acid, that allows P.putida strain KT2440 to grow on L-Lys and L-Arg as the sole source of carbon and nitrogen, through conversion to their respective D-enantiomers. The polypeptide is Broad specificity amino-acid racemase (Pseudomonas putida (strain ATCC 47054 / DSM 6125 / CFBP 8728 / NCIMB 11950 / KT2440)).